The following is a 404-amino-acid chain: Exodeoxyribonuclease 7 large subunit (404 aa).

It belongs to the XseA family. Heterooligomer composed of large and small subunits.

The protein resides in the cytoplasm. It catalyses the reaction Exonucleolytic cleavage in either 5'- to 3'- or 3'- to 5'-direction to yield nucleoside 5'-phosphates.. Functionally, bidirectionally degrades single-stranded DNA into large acid-insoluble oligonucleotides, which are then degraded further into small acid-soluble oligonucleotides. This chain is Exodeoxyribonuclease 7 large subunit, found in Tropheryma whipplei (strain TW08/27) (Whipple's bacillus).